The primary structure comprises 170 residues: MIIERLVGNLRDLNPLDFSVDHVDLEWFETRKKIARFKTRQGKDIAIRLKDAPKLGLSQGDILFKEEKEIIAVNILDSEVIHIQAKSVAEVAKICYEIGNRHAALYYGESQFEFKTPFEKPTLALLEKLGVQNRVLSSKLDSKERLTVSMPHSEPNFKVSLASDFKVVVK.

It belongs to the UreE family.

It localises to the cytoplasm. Involved in urease metallocenter assembly. Binds nickel. Probably functions as a nickel donor during metallocenter assembly. In Helicobacter pylori (strain ATCC 700392 / 26695) (Campylobacter pylori), this protein is Urease accessory protein UreE.